An 80-amino-acid polypeptide reads, in one-letter code: Calmodulin (80 aa).

2 EF-hand domains span residues 12–47 and 48–80; these read DSEEEIREAFRVFDKDGNGFISAAELRHVMTNLGEK and LTDEEVDEMIREADIDGDGQVNYEEFVAMMTSK. 9 residues coordinate Ca(2+): D25, D27, N29, E36, D61, D63, D65, Q67, and E72.

The protein belongs to the calmodulin family.

Calmodulin mediates the control of a large number of enzymes, ion channels and other proteins by Ca(2+). Among the enzymes to be stimulated by the calmodulin-Ca(2+) complex are a number of protein kinases and phosphatases. This Strongylocentrotus purpuratus (Purple sea urchin) protein is Calmodulin.